The primary structure comprises 356 residues: Guanine nucleotide-binding protein alpha-3 subunit (356 aa).

Residues 1–26 (MGACMSKNDEETEQKKRSQKIDRDLE) form a disordered region. Glycine 2 carries the N-myristoyl glycine lipid modification. The S-palmitoyl cysteine moiety is linked to residue cysteine 4. A compositionally biased stretch (basic and acidic residues) spans 7-23 (KNDEETEQKKRSQKIDR). Positions 34–356 (KECKILLLGS…NNALKDSGIL (323 aa)) constitute a G-alpha domain. Residues 37-50 (KILLLGSGESGKST) are G1 motif. Residues 42–49 (GSGESGKS), 179–185 (LRARTKT), 204–208 (DVGGQ), 273–276 (NKVD), and alanine 328 contribute to the GTP site. Serine 49 and threonine 185 together coordinate Mg(2+). The segment at 177–185 (DVLRARTKT) is G2 motif. The interval 200–209 (IHMFDVGGQR) is G3 motif. Positions 269-276 (ILFLNKVD) are G4 motif. Residues 326 to 331 (TQATDT) are G5 motif.

It belongs to the G-alpha family. G(q) subfamily. In terms of assembly, g proteins are composed of 3 units; alpha, beta and gamma. The alpha chain contains the guanine nucleotide binding site.

Guanine nucleotide-binding proteins (G proteins) are involved as modulators or transducers in various transmembrane signaling systems. Involved in conidiation. This chain is Guanine nucleotide-binding protein alpha-3 subunit (gna-3), found in Neurospora crassa (strain ATCC 24698 / 74-OR23-1A / CBS 708.71 / DSM 1257 / FGSC 987).